An 81-amino-acid chain; its full sequence is Photosystem I iron-sulfur center (81 aa).

4Fe-4S ferredoxin-type domains are found at residues 2–31 (SHIVKIYDTCIGCTQCVRACPLDVLEMVPW) and 39–68 (MASAPRTEDCVGCKRCESACPTDFLSVRVY). 8 residues coordinate [4Fe-4S] cluster: Cys-11, Cys-14, Cys-17, Cys-21, Cys-48, Cys-51, Cys-54, and Cys-58.

In terms of assembly, the eukaryotic PSI reaction center is composed of at least 11 subunits. The cofactor is [4Fe-4S] cluster.

It is found in the plastid. Its subcellular location is the chloroplast thylakoid membrane. The catalysed reaction is reduced [plastocyanin] + hnu + oxidized [2Fe-2S]-[ferredoxin] = oxidized [plastocyanin] + reduced [2Fe-2S]-[ferredoxin]. Functionally, apoprotein for the two 4Fe-4S centers FA and FB of photosystem I (PSI); essential for photochemical activity. FB is the terminal electron acceptor of PSI, donating electrons to ferredoxin. The C-terminus interacts with PsaA/B/D and helps assemble the protein into the PSI complex. Required for binding of PsaD and PsaE to PSI. PSI is a plastocyanin/cytochrome c6-ferredoxin oxidoreductase, converting photonic excitation into a charge separation, which transfers an electron from the donor P700 chlorophyll pair to the spectroscopically characterized acceptors A0, A1, FX, FA and FB in turn. The sequence is that of Photosystem I iron-sulfur center from Stigeoclonium helveticum (Green alga).